We begin with the raw amino-acid sequence, 258 residues long: Phosphate import ATP-binding protein PstB (258 aa).

One can recognise an ABC transporter domain in the interval 5 to 247 (IDVSGLTAYY…ERIFSNPSVQ (243 aa)). Residue 37–44 (GPSGCGKS) coordinates ATP.

This sequence belongs to the ABC transporter superfamily. Phosphate importer (TC 3.A.1.7) family. In terms of assembly, the complex is composed of two ATP-binding proteins (PstB), two transmembrane proteins (PstC and PstA) and a solute-binding protein (PstS).

It localises to the cell membrane. It carries out the reaction phosphate(out) + ATP + H2O = ADP + 2 phosphate(in) + H(+). Its function is as follows. Part of the ABC transporter complex PstSACB involved in phosphate import. Responsible for energy coupling to the transport system. The chain is Phosphate import ATP-binding protein PstB from Streptomyces avermitilis (strain ATCC 31267 / DSM 46492 / JCM 5070 / NBRC 14893 / NCIMB 12804 / NRRL 8165 / MA-4680).